The chain runs to 509 residues: MIISRGSHVDEEPVAKKPRISVGEMTDDTTDDGLNTEEIRAPYTTEEMDEPEKAALLPKIPKKSPVSIGMNPENGKYVLPNYSKDESLNARKFLKYYGLRKFLDTYLPEELNSLYIYSLIKLLGFEIRDKELLSSLYRFFHPVKSSDQFKLEYEDFTDPLEKKEAVKLIKDLQKAINRVLATRIRLSNFYTIDHFVSKIKKAERILVLTGAGVSTSLGIPDFRSSEGFYSKIQHLGLDDPQDVFNYDIFMQDPSVFYNIAHMILPPENMYSPLHSFIKMLQDKGKLLRNYTQNIDNLESYAGIDPEKLVQCHGSFATASCVTCHWQIPGEKIFSNIRSMELPLCPYCYQKRREYFPNTGDEEYDTLKGNLESGIQNNNFALKSYGVLKPDITFFGEALPSKFHKTIREDIMKCDLLICIGTSLKVAPVSEIVNMIPAYVPQVLINKDPVKHAEFDIELLGFCDDVATVVAQKCEWDIPHKDWEGKLKKKRFDVNEIERGVFNIEAGSPE.

Residues 1–35 are disordered; it reads MIISRGSHVDEEPVAKKPRISVGEMTDDTTDDGLN. The segment covering 25–35 has biased composition (acidic residues); sequence MTDDTTDDGLN. The 292-residue stretch at 185 to 476 folds into the Deacetylase sirtuin-type domain; it reads RLSNFYTIDH…TVVAQKCEWD (292 aa). NAD(+) contacts are provided by residues 210 to 229 and 292 to 295; these read GAGV…EGFY and QNID. His312 acts as the Proton acceptor in catalysis. Residues Cys320, Cys323, Cys344, and Cys347 each contribute to the Zn(2+) site. NAD(+) contacts are provided by residues 420 to 422, 445 to 447, and Cys462; these read GTS and NKD.

It belongs to the sirtuin family. Class I subfamily. The cofactor is Zn(2+).

Its subcellular location is the nucleus. It catalyses the reaction N(6)-acetyl-L-lysyl-[protein] + NAD(+) + H2O = 2''-O-acetyl-ADP-D-ribose + nicotinamide + L-lysyl-[protein]. Its function is as follows. NAD-dependent deacetylase. Heterochromatin component that silences transcription at silent mating loci, telomeres and the ribosomal DNA, and that also suppresses recombination in the rDNA and extends replicative life span. It acts as a NAD-dependent histone deacetylase, which deacetylates 'Lys-9' and 'Lys-14' of Histone H3 and 'Lys-16' of Histone H4. This chain is NAD-dependent histone deacetylase SIR2 (SIR2), found in Candida glabrata (strain ATCC 2001 / BCRC 20586 / JCM 3761 / NBRC 0622 / NRRL Y-65 / CBS 138) (Yeast).